The sequence spans 91 residues: Non-specific lipid-transfer protein 1 (91 aa).

Intrachain disulfides connect cysteine 3-cysteine 50, cysteine 13-cysteine 27, cysteine 28-cysteine 73, and cysteine 48-cysteine 87.

Belongs to the plant LTP family.

Its function is as follows. Plant non-specific lipid-transfer proteins transfer phospholipids as well as galactolipids across membranes. May play a role in wax or cutin deposition in the cell walls of expanding epidermal cells and certain secretory tissues. This is Non-specific lipid-transfer protein 1 from Morus nigra (Black mulberry).